The sequence spans 444 residues: Trigger factor (444 aa).

The PPIase FKBP-type domain maps to 165–250 (GDFAKFDFEG…LHEIQELKIP (86 aa)).

The protein belongs to the FKBP-type PPIase family. Tig subfamily.

Its subcellular location is the cytoplasm. It carries out the reaction [protein]-peptidylproline (omega=180) = [protein]-peptidylproline (omega=0). Functionally, involved in protein export. Acts as a chaperone by maintaining the newly synthesized protein in an open conformation. Functions as a peptidyl-prolyl cis-trans isomerase. This is Trigger factor from Campylobacter jejuni subsp. jejuni serotype O:23/36 (strain 81-176).